Reading from the N-terminus, the 228-residue chain is Prolactin-2A1 (228 aa).

The signal sequence occupies residues 1-28 (MQLSVTHPCCRTLILLLVSNLLLWESEA). Intrachain disulfides connect C87–C203 and C220–C228.

This sequence belongs to the somatotropin/prolactin family. Expressed specifically in the placenta. Expression restricted to the junctional zone of the chorioallantoic placenta.

It is found in the secreted. The chain is Prolactin-2A1 (Prl2a1) from Mus musculus (Mouse).